Consider the following 321-residue polypeptide: Anthranilate phosphoribosyltransferase (321 aa).

5-phospho-alpha-D-ribose 1-diphosphate-binding positions include Gly72, 75–76 (GD), Thr80, 82–85 (NVST), 99–107 (KHGNVSITS), and Ser111. Gly72 is an anthranilate binding site. Ser84 is a binding site for Mg(2+). Asn102 contacts anthranilate. Residue Arg157 coordinates anthranilate. Mg(2+)-binding residues include Asp216 and Glu217.

This sequence belongs to the anthranilate phosphoribosyltransferase family. In terms of assembly, homodimer. Mg(2+) is required as a cofactor.

It carries out the reaction N-(5-phospho-beta-D-ribosyl)anthranilate + diphosphate = 5-phospho-alpha-D-ribose 1-diphosphate + anthranilate. It participates in amino-acid biosynthesis; L-tryptophan biosynthesis; L-tryptophan from chorismate: step 2/5. Its function is as follows. Catalyzes the transfer of the phosphoribosyl group of 5-phosphorylribose-1-pyrophosphate (PRPP) to anthranilate to yield N-(5'-phosphoribosyl)-anthranilate (PRA). This is Anthranilate phosphoribosyltransferase from Methanococcus maripaludis (strain DSM 14266 / JCM 13030 / NBRC 101832 / S2 / LL).